The primary structure comprises 147 residues: Putative protein adenylyltransferase MJ1305 (147 aa).

The GSX(10)DXD motif motif lies at 32-46; sequence GSYARGTAVEYSDVD. Positions 44 and 46 each coordinate Mg(2+).

This sequence belongs to the MntA antitoxin family. Requires Mg(2+) as cofactor.

It carries out the reaction L-tyrosyl-[protein] + ATP = O-(5'-adenylyl)-L-tyrosyl-[protein] + diphosphate. The catalysed reaction is O-(5'-adenylyl)-L-tyrosyl-[protein] + ATP = O-[5'-(adenylyl-(5'-&gt;3')-adenylyl)]-L-tyrosyl-[protein] + diphosphate. Putative antitoxin component of a putative type VII toxin-antitoxin (TA) system. Its cognate toxin might be MJ1304, which it might AMPylate. The sequence is that of Putative protein adenylyltransferase MJ1305 from Methanocaldococcus jannaschii (strain ATCC 43067 / DSM 2661 / JAL-1 / JCM 10045 / NBRC 100440) (Methanococcus jannaschii).